Consider the following 581-residue polypeptide: Zinc finger protein 674 (581 aa).

The KRAB domain occupies 8–79 (LTFKDVFVDF…DGGTPVRTCA (72 aa)). C2H2-type zinc fingers lie at residues 224-246 (YKCT…QRTH), 252-274 (YECC…QRTH), 280-302 (YECS…QRTH), and 308-330 (FVCD…EKTH). A compositionally biased stretch (basic and acidic residues) spans 357–371 (PQCSEHGKASDEKPS). The segment at 357–377 (PQCSEHGKASDEKPSPTKHWR) is disordered. 7 C2H2-type zinc fingers span residues 385–407 (YECS…QRIH), 413–435 (YECS…HRTH), 441–463 (YECR…QRMH), 469–491 (YKCN…QRIH), 497–519 (YECT…QRIH), 525–547 (YKCS…HRTH), and 553–575 (YECR…QRSH).

It belongs to the krueppel C2H2-type zinc-finger protein family. In terms of tissue distribution, expressed in testis.

Its subcellular location is the nucleus. Its function is as follows. May be involved in transcriptional regulation. This is Zinc finger protein 674 (ZNF674) from Homo sapiens (Human).